Reading from the N-terminus, the 344-residue chain is F-box protein HRT3 (344 aa).

Residues 14 to 47 form a TPR repeat; it reads AIAIWEKGVLKEKDGSMSDAINFYRSALKIHDNV. The region spanning 98–148 is the F-box domain; sequence WILEILPDDILLRIIKKVILMSGESWVNLSMTCSTFSKLCFHDSVPFKTFA.

As to quaternary structure, interacts with SKP1. Component of the probable SCF(HRT3) complex containing CDC53, SKP1, RBX1 and HRT3.

It functions in the pathway protein modification; protein ubiquitination. In terms of biological role, substrate recognition component of a SCF (SKP1-CUL1-F-box protein) E3 ubiquitin-protein ligase complex which mediates the ubiquitination and subsequent proteasomal degradation of target proteins. Probably recognizes and binds to phosphorylated target proteins. The protein is F-box protein HRT3 (HRT3) of Saccharomyces cerevisiae (strain ATCC 204508 / S288c) (Baker's yeast).